A 483-amino-acid chain; its full sequence is Regulatory protein ViaA (483 aa).

This sequence belongs to the ViaA family. In terms of assembly, homodimer. Interacts with RavA.

Its subcellular location is the cytoplasm. Its function is as follows. Component of the RavA-ViaA chaperone complex, which may act on the membrane to optimize the function of some of the respiratory chains. ViaA stimulates the ATPase activity of RavA. The polypeptide is Regulatory protein ViaA (Escherichia coli (strain SMS-3-5 / SECEC)).